The sequence spans 764 residues: 5-methyltetrahydropteroyltriglutamate--homocysteine methyltransferase (764 aa).

5-methyltetrahydropteroyltri-L-glutamate is bound by residues 16–19 and K121; that span reads RELK. Residues 440–442 and E493 contribute to the L-homocysteine site; that span reads IGS. L-methionine contacts are provided by residues 440–442 and E493; that span reads IGS. 5-methyltetrahydropteroyltri-L-glutamate is bound by residues 524–525 and W570; that span reads RC. D608 is an L-homocysteine binding site. Position 608 (D608) interacts with L-methionine. 5-methyltetrahydropteroyltri-L-glutamate is bound at residue E614. Residues H650, C652, and E674 each contribute to the Zn(2+) site. H703 (proton donor) is an active-site residue. C735 contributes to the Zn(2+) binding site.

It belongs to the vitamin-B12 independent methionine synthase family. Zn(2+) is required as a cofactor.

It carries out the reaction 5-methyltetrahydropteroyltri-L-glutamate + L-homocysteine = tetrahydropteroyltri-L-glutamate + L-methionine. It participates in amino-acid biosynthesis; L-methionine biosynthesis via de novo pathway; L-methionine from L-homocysteine (MetE route): step 1/1. In terms of biological role, catalyzes the transfer of a methyl group from 5-methyltetrahydrofolate to homocysteine resulting in methionine formation. This chain is 5-methyltetrahydropteroyltriglutamate--homocysteine methyltransferase, found in Burkholderia ambifaria (strain ATCC BAA-244 / DSM 16087 / CCUG 44356 / LMG 19182 / AMMD) (Burkholderia cepacia (strain AMMD)).